Reading from the N-terminus, the 229-residue chain is Dephospho-CoA kinase domain-containing protein (229 aa).

The DPCK domain maps to 3–207; the sequence is LVGLTGGIAS…DCMQFLIIRA (205 aa). 8–15 contacts ATP; it reads GGIASGKS.

This sequence belongs to the CoaE family.

The sequence is that of Dephospho-CoA kinase domain-containing protein (dcakd) from Danio rerio (Zebrafish).